Here is a 103-residue protein sequence, read N- to C-terminus: Small ribosomal subunit protein uS14c (103 aa).

The protein belongs to the universal ribosomal protein uS14 family. Part of the 30S ribosomal subunit.

It is found in the plastid. Its subcellular location is the chloroplast. Binds 16S rRNA, required for the assembly of 30S particles. This is Small ribosomal subunit protein uS14c from Agrostis stolonifera (Creeping bentgrass).